The primary structure comprises 167 residues: Troponin C-akin-1 protein (167 aa).

17–20 (YGAL) is a binding site for substrate. The active-site Proton acceptor is E92.

The protein belongs to the gamma-glutamylcyclotransferase family. In embryos, expression is seen in heart cells of the dorsal vessel and hindgut visceral mesoderm.

Putative gamma-glutamylcyclotransferase. This Drosophila melanogaster (Fruit fly) protein is Troponin C-akin-1 protein (Tina-1).